The primary structure comprises 546 residues: Probable protein kinase UbiB (546 aa).

Residues aspartate 123–leucine 501 form the Protein kinase domain. ATP-binding positions include leucine 129 to valine 137 and lysine 152. The active-site Proton acceptor is aspartate 287. The next 2 membrane-spanning stretches (helical) occupy residues glycine 496–leucine 516 and histidine 521–phenylalanine 541.

This sequence belongs to the ABC1 family. UbiB subfamily.

It is found in the cell inner membrane. The protein operates within cofactor biosynthesis; ubiquinone biosynthesis [regulation]. Is probably a protein kinase regulator of UbiI activity which is involved in aerobic coenzyme Q (ubiquinone) biosynthesis. The chain is Probable protein kinase UbiB from Aeromonas salmonicida (strain A449).